The chain runs to 351 residues: Translation initiation factor eIF2B subunit beta (351 aa).

This sequence belongs to the eIF-2B alpha/beta/delta subunits family. In terms of assembly, component of the translation initiation factor 2B (eIF2B) complex which is a heterodecamer of two sets of five different subunits: alpha, beta, gamma, delta and epsilon. Subunits alpha, beta and delta comprise a regulatory subcomplex and subunits epsilon and gamma comprise a catalytic subcomplex. Within the complex, the hexameric regulatory complex resides at the center, with the two heterodimeric catalytic subcomplexes bound on opposite sides.

The protein resides in the cytoplasm. It is found in the cytosol. Activated by the chemical integrated stress response (ISR) inhibitor ISRIB which stimulates guanine nucleotide exchange factor activity for both phosphorylated and unphosphorylated eIF2. Acts as a component of the translation initiation factor 2B (eIF2B) complex, which catalyzes the exchange of GDP for GTP on eukaryotic initiation factor 2 (eIF2) gamma subunit. Its guanine nucleotide exchange factor activity is repressed when bound to eIF2 complex phosphorylated on the alpha subunit, thereby limiting the amount of methionyl-initiator methionine tRNA available to the ribosome and consequently global translation is repressed. In Bos taurus (Bovine), this protein is Translation initiation factor eIF2B subunit beta (EIF2B2).